We begin with the raw amino-acid sequence, 332 residues long: Glyceraldehyde-3-phosphate dehydrogenase (332 aa).

NAD(+) is bound by residues 10 to 11 (RI), Asp-36, Lys-81, and Ser-116. Residues 150-152 (SCT), Thr-181, Arg-197, 210-211 (TK), and Arg-233 each bind D-glyceraldehyde 3-phosphate. Cys-151 acts as the Nucleophile in catalysis. Asn-314 is a binding site for NAD(+).

Belongs to the glyceraldehyde-3-phosphate dehydrogenase family. Homotetramer.

It is found in the cytoplasm. It carries out the reaction D-glyceraldehyde 3-phosphate + phosphate + NAD(+) = (2R)-3-phospho-glyceroyl phosphate + NADH + H(+). Its pathway is carbohydrate degradation; glycolysis; pyruvate from D-glyceraldehyde 3-phosphate: step 1/5. Catalyzes the oxidative phosphorylation of glyceraldehyde 3-phosphate (G3P) to 1,3-bisphosphoglycerate (BPG) using the cofactor NAD. The first reaction step involves the formation of a hemiacetal intermediate between G3P and a cysteine residue, and this hemiacetal intermediate is then oxidized to a thioester, with concomitant reduction of NAD to NADH. The reduced NADH is then exchanged with the second NAD, and the thioester is attacked by a nucleophilic inorganic phosphate to produce BPG. The sequence is that of Glyceraldehyde-3-phosphate dehydrogenase (gapA) from Helicobacter pylori (strain J99 / ATCC 700824) (Campylobacter pylori J99).